The following is a 188-amino-acid chain: Elongation factor P (188 aa).

Belongs to the elongation factor P family.

The protein resides in the cytoplasm. Its pathway is protein biosynthesis; polypeptide chain elongation. Functionally, involved in peptide bond synthesis. Stimulates efficient translation and peptide-bond synthesis on native or reconstituted 70S ribosomes in vitro. Probably functions indirectly by altering the affinity of the ribosome for aminoacyl-tRNA, thus increasing their reactivity as acceptors for peptidyl transferase. This chain is Elongation factor P, found in Caulobacter sp. (strain K31).